The following is a 162-amino-acid chain: Protein-export protein SecB (162 aa).

Belongs to the SecB family. Homotetramer, a dimer of dimers. One homotetramer interacts with 1 SecA dimer.

It is found in the cytoplasm. In terms of biological role, one of the proteins required for the normal export of preproteins out of the cell cytoplasm. It is a molecular chaperone that binds to a subset of precursor proteins, maintaining them in a translocation-competent state. It also specifically binds to its receptor SecA. This Pseudomonas savastanoi pv. phaseolicola (strain 1448A / Race 6) (Pseudomonas syringae pv. phaseolicola (strain 1448A / Race 6)) protein is Protein-export protein SecB.